The sequence spans 764 residues: Bifunctional type I diterpene synthase tndC (764 aa).

A terpene cyclase region spans residues 1–324 (MEYRYSTVVD…CPRYHPWSSY (324 aa)). The Mg(2+) site is built by D92 and D96. A DDXXD 1 motif is present at residues 92–96 (DDVTD). Residues 224 to 232 (NDLYSWQKE) carry the NSE/DTE motif. The interval 325–761 (NERQLDWMKN…FQLRLILEML (437 aa)) is prenyltransferase. Residues 377–403 (AVNGNGASHTSSIKGSTGGNGVTHSPV) are disordered. Residues 381-391 (NGASHTSSIKG) are compositionally biased toward polar residues. Residues K484, R487, and H516 each coordinate isopentenyl diphosphate. Residues D523 and D527 each coordinate Mg(2+). Residues 523 to 527 (DDLED) carry the DDXXD 2 motif. R532 lines the dimethylallyl diphosphate pocket. An isopentenyl diphosphate-binding site is contributed by R533. Residues K610, T611, Q646, N653, K663, and K673 each coordinate dimethylallyl diphosphate.

The protein in the N-terminal section; belongs to the terpene synthase family. It in the C-terminal section; belongs to the FPP/GGPP synthase family.

It catalyses the reaction isopentenyl diphosphate + (2E,6E)-farnesyl diphosphate = (2E,6E,10E)-geranylgeranyl diphosphate + diphosphate. It carries out the reaction (2E,6E,10E)-geranylgeranyl diphosphate = talarodiene + diphosphate. The protein operates within secondary metabolite biosynthesis; terpenoid biosynthesis. In terms of biological role, bifunctional type I diterpene synthase; part of the gene cluster that mediates the biosynthesis of talaronoid C, a fusicoccane diterpenoid with an unprecedented tricyclic 5/8/6 ring system. The first step in the pathway is performed by the fusicoccadiene synthase tndC that possesses both prenyl transferase and terpene cyclase activity, converting isopentenyl diphosphate and dimethylallyl diphosphate into geranylgeranyl diphosphate (GGDP) and further converting GGDP into talarodiene, a precursor for talaronoid C. The remaining enzymes from the cluster include the cytochrome P450 monooxygenase tndB, the aldehyde reductase tndE and the alcohol dehydrogenase tndF that are involved in the conversion of talarodiene into talaronoid C. The sequence is that of Bifunctional type I diterpene synthase tndC from Aspergillus flavipes.